We begin with the raw amino-acid sequence, 224 residues long: Cytochrome c oxidase subunit 2 (224 aa).

Residues M1–H26 lie on the Mitochondrial intermembrane side of the membrane. A helical membrane pass occupies residues A27–N48. Topologically, residues T49–E62 are mitochondrial matrix. The chain crosses the membrane as a helical span at residues T63–R82. Residues L83–N224 are Mitochondrial intermembrane-facing. Positions 161, 196, 198, 200, 204, and 207 each coordinate Cu cation. Position 198 (E198) interacts with Mg(2+).

Belongs to the cytochrome c oxidase subunit 2 family. Component of the cytochrome c oxidase (complex IV, CIV), a multisubunit enzyme composed of a catalytic core of 3 subunits and several supernumerary subunits. The complex exists as a monomer or a dimer and forms supercomplexes (SCs) in the inner mitochondrial membrane with ubiquinol-cytochrome c oxidoreductase (cytochrome b-c1 complex, complex III, CIII). Cu cation serves as cofactor.

It localises to the mitochondrion inner membrane. The enzyme catalyses 4 Fe(II)-[cytochrome c] + O2 + 8 H(+)(in) = 4 Fe(III)-[cytochrome c] + 2 H2O + 4 H(+)(out). Functionally, component of the cytochrome c oxidase, the last enzyme in the mitochondrial electron transport chain which drives oxidative phosphorylation. The respiratory chain contains 3 multisubunit complexes succinate dehydrogenase (complex II, CII), ubiquinol-cytochrome c oxidoreductase (cytochrome b-c1 complex, complex III, CIII) and cytochrome c oxidase (complex IV, CIV), that cooperate to transfer electrons derived from NADH and succinate to molecular oxygen, creating an electrochemical gradient over the inner membrane that drives transmembrane transport and the ATP synthase. Cytochrome c oxidase is the component of the respiratory chain that catalyzes the reduction of oxygen to water. Electrons originating from reduced cytochrome c in the intermembrane space (IMS) are transferred via the dinuclear copper A center (CU(A)) of subunit 2 and heme A of subunit 1 to the active site in subunit 1, a binuclear center (BNC) formed by heme A3 and copper B (CU(B)). The BNC reduces molecular oxygen to 2 water molecules using 4 electrons from cytochrome c in the IMS and 4 protons from the mitochondrial matrix. In Albinaria turrita (Door snail), this protein is Cytochrome c oxidase subunit 2 (COII).